The primary structure comprises 1272 residues: Myosin-binding protein C, cardiac-type (1272 aa).

The segment at 95–147 is disordered; it reads KEPEKSEPVAPAEASPAPAASELPAPPVESNQNPEVPPAETQPEEPVDPIGLF. Positions 102–117 are enriched in low complexity; the sequence is PVAPAEASPAPAASEL. The region spanning 137–252 is the Ig-like C2-type 1 domain; sequence PEEPVDPIGL…NLIVNEAPVS (116 aa). Position 265 is a phosphoserine; by PKA and PKC (Ser-265). Thr-274 carries the phosphothreonine; by PKA and PKC modification. Ser-300 bears the Phosphoserine; by PKA mark. 4 Ig-like C2-type domains span residues 359-451, 452-542, 543-640, and 644-763; these read KKST…VKEP, PILI…VQEK, KLEV…FVPR, and PKIH…ADIT. 2 Fibronectin type-III domains span residues 772–868 and 870–965; these read PPEA…IAPP and EPTH…VQEI. In terms of domain architecture, Ig-like C2-type 6 spans 969-1057; that stretch reads PKICVPRHLR…ENMTDTVAIT (89 aa). A Fibronectin type-III 3 domain is found at 1066–1161; that stretch reads PPQNIKLADV…TKNPAYIQKT (96 aa). Ser-1169 carries the phosphoserine; by PKC modification. Residues 1179 to 1263 enclose the Ig-like C2-type 7 domain; that stretch reads PKFTHPLVNR…VNERGEAEIE (85 aa).

This sequence belongs to the immunoglobulin superfamily. MyBP family. Substrate for phosphorylation by PKA and PKC. Reversible phosphorylation appears to modulate contraction. In terms of tissue distribution, expressed specifically in cardiac muscle among adult tissues, but is also expressed transiently in the skeletal muscle at early developmental stages. Isoform Type I is found in embryonic skeletal muscle and isoform Type II is found in both embryonic skeletal and cardiac muscle.

Functionally, thick filament-associated protein located in the crossbridge region of vertebrate striated muscle A bands. In vitro it binds MHC, F-actin and native thin filaments, and modifies the activity of actin-activated myosin ATPase. It may modulate muscle contraction or may play a more structural role. May be involved in the early phase of myofibrillogenesis. This chain is Myosin-binding protein C, cardiac-type (MYBPC3), found in Gallus gallus (Chicken).